The chain runs to 62 residues: MARKCVITGRKTKAGNNRSHAMNSTKRTWGANLQKVRILVDGKPKRVYVSARALKSGKVERV.

The segment at 1–24 (MARKCVITGRKTKAGNNRSHAMNS) is disordered. Over residues 14–24 (AGNNRSHAMNS) the composition is skewed to polar residues.

This sequence belongs to the bacterial ribosomal protein bL28 family.

This Bacillus pumilus (strain SAFR-032) protein is Large ribosomal subunit protein bL28.